The following is a 122-amino-acid chain: Acidic phospholipase A2 (122 aa).

7 cysteine pairs are disulfide-bonded: cysteine 26–cysteine 115, cysteine 28–cysteine 44, cysteine 43–cysteine 95, cysteine 49–cysteine 122, cysteine 50–cysteine 88, cysteine 57–cysteine 81, and cysteine 75–cysteine 86. Tyrosine 27, glycine 29, and glycine 31 together coordinate Ca(2+). Histidine 47 is an active-site residue. Aspartate 48 provides a ligand contact to Ca(2+). Aspartate 89 is a catalytic residue.

Ca(2+) is required as a cofactor. As to expression, expressed by the venom gland.

Its subcellular location is the secreted. The enzyme catalyses a 1,2-diacyl-sn-glycero-3-phosphocholine + H2O = a 1-acyl-sn-glycero-3-phosphocholine + a fatty acid + H(+). In terms of biological role, PLA2 catalyzes the calcium-dependent hydrolysis of the 2-acyl groups in 3-sn-phosphoglycerides. This is Acidic phospholipase A2 from Lachesis stenophrys (Central American bushmaster).